The sequence spans 730 residues: Polyribonucleotide nucleotidyltransferase (730 aa).

Residues aspartate 489 and aspartate 495 each contribute to the Mg(2+) site. A KH domain is found at 556–615; it reads PKIDTIKVDVDKIKIVIGKGGETIDKIIEETGVKIDIDEDGNIAIYSSDQEAINRTKEII. Residues 625-693 form the S1 motif domain; it reads GEIYEAEVVR…DKGRIDASMK (69 aa). The disordered stretch occupies residues 691–730; it reads SMKALLPRPPRSEKSNKEDHQSVRHHGSPKDDKGKEKYDK. Over residues 700–730 the composition is skewed to basic and acidic residues; it reads PRSEKSNKEDHQSVRHHGSPKDDKGKEKYDK.

Belongs to the polyribonucleotide nucleotidyltransferase family. It depends on Mg(2+) as a cofactor.

The protein resides in the cytoplasm. The enzyme catalyses RNA(n+1) + phosphate = RNA(n) + a ribonucleoside 5'-diphosphate. Involved in mRNA degradation. Catalyzes the phosphorolysis of single-stranded polyribonucleotides processively in the 3'- to 5'-direction. This chain is Polyribonucleotide nucleotidyltransferase, found in Streptococcus mutans serotype c (strain ATCC 700610 / UA159).